The sequence spans 255 residues: Superoxide dismutase [Fe] 2, chloroplastic (255 aa).

A chloroplast-targeting transit peptide spans 1 to 32 (MAAFASALRVLPSPPAAVPRRLRSREQRQGCR). His67, His119, Asp203, and His207 together coordinate Fe cation.

It belongs to the iron/manganese superoxide dismutase family. In terms of assembly, homodimer. Fe cation serves as cofactor. In terms of tissue distribution, strongly expressed in the stems of the young seedlings, etiolated seedlings and embryogenic calli, but only minimally expressed in the leaves and the roots.

The protein localises to the plastid. The protein resides in the chloroplast. It catalyses the reaction 2 superoxide + 2 H(+) = H2O2 + O2. Destroys superoxide anion radicals which are normally produced within the cells and which are toxic to biological systems. This Oryza sativa subsp. japonica (Rice) protein is Superoxide dismutase [Fe] 2, chloroplastic.